Reading from the N-terminus, the 100-residue chain is RNA-binding protein YlxQ (100 aa).

This sequence belongs to the eukaryotic ribosomal protein eL8 family.

Functionally, RNA-binding protein that recognizes the K-turn motif present in ribosomal RNA, but also in box C/D and box C'/D' sRNAs. The protein is RNA-binding protein YlxQ of Bacillus subtilis (strain 168).